The primary structure comprises 333 residues: Starch-binding domain-containing protein 1 (333 aa).

Topologically, residues 1 to 6 (MGAVWS) are extracellular. Residues 7–23 (ALLVGGGLAGALILWLL) traverse the membrane as a helical segment. The Cytoplasmic portion of the chain corresponds to 24–333 (RGDSGAPGKD…KVVHGWWGIH (310 aa)). 2 disordered regions span residues 31-73 (GKDG…ELVS) and 106-139 (NARE…RVGE). Gly residues predominate over residues 50-61 (PGGGPGGGGSGG). The residue at position 67 (S67) is a Phosphoserine. The span at 124 to 134 (NSETSRNQSPE) shows a compositional bias: polar residues. Phosphoserine occurs at positions 135 and 162. Residues 181 to 187 (HEDWEVV) carry the LIR motif. A phosphoserine mark is found at S191, S192, S201, S205, S208, S216, and S219. The CBM20 domain occupies 233–332 (SVKPRQVSIQ…DKVVHGWWGI (100 aa)).

As to quaternary structure, interacts with the ATG8 family proteins GABARAP and GABARAPL1. Interacts with several glycogen-associated proteins, such as GYS2 (liver glycogen synthase), GDE (glycogen debranching enzyme), GBE1 (glycogen branching enzyme 1) and EPM2A (Laforin). In terms of processing, ubiquitinated, which leads to proteasomal degradation.

The protein resides in the preautophagosomal structure membrane. The protein localises to the endoplasmic reticulum membrane. It localises to the cell membrane. Its subcellular location is the sarcolemma. It is found in the T-tubule. Its function is as follows. Acts as a cargo receptor for glycogen. Delivers its cargo to an autophagic pathway called glycophagy, resulting in the transport of glycogen to lysosomes. This Rattus norvegicus (Rat) protein is Starch-binding domain-containing protein 1.